The sequence spans 86 residues: Neurotoxin LmNaTx17 (86 aa).

The first 18 residues, 1–18, serve as a signal peptide directing secretion; the sequence is MKILFVIVLAAFFIGVHC. Positions 19-85 constitute an LCN-type CS-alpha/beta domain; that stretch reads KHGYPVQYSG…TWDYKTGKCR (67 aa). 4 disulfides stabilise this stretch: C33/C84, C37/C58, C44/C65, and C48/C67.

Belongs to the long (4 C-C) scorpion toxin superfamily. Sodium channel inhibitor family. Beta subfamily. As to expression, expressed by the venom gland.

Its subcellular location is the secreted. Its function is as follows. Binds voltage-independently at site-4 of sodium channels (Nav) and shift the voltage of activation toward more negative potentials thereby affecting sodium channel activation and promoting spontaneous and repetitive firing. This is Neurotoxin LmNaTx17 from Lychas mucronatus (Chinese swimming scorpion).